Here is a 418-residue protein sequence, read N- to C-terminus: Tyrosine--tRNA ligase (418 aa).

Y34 contributes to the L-tyrosine binding site. Positions 39–48 (PTADSLHLGH) match the 'HIGH' region motif. Y169 and Q173 together coordinate L-tyrosine. A 'KMSKS' region motif is present at residues 229–233 (KFGKS). K232 contacts ATP. Residues 352 to 410 (LNIVELLVTSGIVNSKRQAREDVQNGAIYVNGERVQDLDYTLSDSDKIDGELTVIRRGK) enclose the S4 RNA-binding domain.

It belongs to the class-I aminoacyl-tRNA synthetase family. TyrS type 1 subfamily. As to quaternary structure, homodimer.

It localises to the cytoplasm. It catalyses the reaction tRNA(Tyr) + L-tyrosine + ATP = L-tyrosyl-tRNA(Tyr) + AMP + diphosphate + H(+). In terms of biological role, catalyzes the attachment of tyrosine to tRNA(Tyr) in a two-step reaction: tyrosine is first activated by ATP to form Tyr-AMP and then transferred to the acceptor end of tRNA(Tyr). This chain is Tyrosine--tRNA ligase, found in Streptococcus suis (strain 98HAH33).